A 293-amino-acid chain; its full sequence is Alcohol dehydrogenase 1 (293 aa).

The Zn(2+) site is built by cysteine 26, cysteine 29, cysteine 32, cysteine 40, and cysteine 104. Residues 129 to 134 (GLGAVG), aspartate 153, arginine 158, threonine 199, valine 222, 222 to 224 (VGV), and phenylalanine 249 each bind NAD(+).

This sequence belongs to the zinc-containing alcohol dehydrogenase family. Homodimer. The cofactor is Zn(2+).

Its subcellular location is the cytoplasm. It carries out the reaction a primary alcohol + NAD(+) = an aldehyde + NADH + H(+). The catalysed reaction is a secondary alcohol + NAD(+) = a ketone + NADH + H(+). The protein is Alcohol dehydrogenase 1 (ADH1) of Zea luxurians (Guatemalan teosinte).